We begin with the raw amino-acid sequence, 161 residues long: ATP synthase subunit b 1 (161 aa).

Residues 3-23 form a helical membrane-spanning segment; the sequence is LDATFYALVGLILFFVLIAYL.

The protein belongs to the ATPase B chain family. F-type ATPases have 2 components, F(1) - the catalytic core - and F(0) - the membrane proton channel. F(1) has five subunits: alpha(3), beta(3), gamma(1), delta(1), epsilon(1). F(0) has three main subunits: a(1), b(2) and c(10-14). The alpha and beta chains form an alternating ring which encloses part of the gamma chain. F(1) is attached to F(0) by a central stalk formed by the gamma and epsilon chains, while a peripheral stalk is formed by the delta and b chains.

It localises to the cell inner membrane. In terms of biological role, f(1)F(0) ATP synthase produces ATP from ADP in the presence of a proton or sodium gradient. F-type ATPases consist of two structural domains, F(1) containing the extramembraneous catalytic core and F(0) containing the membrane proton channel, linked together by a central stalk and a peripheral stalk. During catalysis, ATP synthesis in the catalytic domain of F(1) is coupled via a rotary mechanism of the central stalk subunits to proton translocation. Component of the F(0) channel, it forms part of the peripheral stalk, linking F(1) to F(0). This is ATP synthase subunit b 1 from Sinorhizobium medicae (strain WSM419) (Ensifer medicae).